Consider the following 314-residue polypeptide: DNA-directed RNA polymerase subunit alpha (314 aa).

An alpha N-terminal domain (alpha-NTD) region spans residues 1–227 (MTYFQIECVE…SLFYPLTNLN (227 aa)). The interval 239-314 (EEEINQVLIE…LPKEKNIQNT (76 aa)) is alpha C-terminal domain (alpha-CTD).

This sequence belongs to the RNA polymerase alpha chain family. As to quaternary structure, in plastids the minimal PEP RNA polymerase catalytic core is composed of four subunits: alpha, beta, beta', and beta''. When a (nuclear-encoded) sigma factor is associated with the core the holoenzyme is formed, which can initiate transcription.

The protein resides in the plastid. The protein localises to the chloroplast. The catalysed reaction is RNA(n) + a ribonucleoside 5'-triphosphate = RNA(n+1) + diphosphate. Its function is as follows. DNA-dependent RNA polymerase catalyzes the transcription of DNA into RNA using the four ribonucleoside triphosphates as substrates. This Gracilaria tenuistipitata var. liui (Red alga) protein is DNA-directed RNA polymerase subunit alpha.